The following is a 352-amino-acid chain: Photosystem II D2 protein (352 aa).

Thr-2 carries the N-acetylthreonine modification. Position 2 is a phosphothreonine (Thr-2). Residues 40–60 (CAYFALGGWLTGTTFVTSWYT) traverse the membrane as a helical segment. A chlorophyll a-binding site is contributed by His-117. A helical transmembrane segment spans residues 124–140 (GFMLRQFEIARSVNLRP). Positions 129 and 142 each coordinate pheophytin a. The helical transmembrane segment at 152 to 165 (VFVSVFLIYPLGQS) threads the bilayer. His-197 provides a ligand contact to chlorophyll a. Residues 207–227 (AALLCAIHGATVENTLFEDGD) traverse the membrane as a helical segment. 2 residues coordinate a plastoquinone: His-214 and Phe-261. His-214 serves as a coordination point for Fe cation. His-268 contacts Fe cation. A helical membrane pass occupies residues 278-294 (GLWMSAIGVVGLALNLR).

It belongs to the reaction center PufL/M/PsbA/D family. PSII is composed of 1 copy each of membrane proteins PsbA, PsbB, PsbC, PsbD, PsbE, PsbF, PsbH, PsbI, PsbJ, PsbK, PsbL, PsbM, PsbT, PsbX, PsbY, PsbZ, Psb30/Ycf12, at least 3 peripheral proteins of the oxygen-evolving complex and a large number of cofactors. It forms dimeric complexes. The D1/D2 heterodimer binds P680, chlorophylls that are the primary electron donor of PSII, and subsequent electron acceptors. It shares a non-heme iron and each subunit binds pheophytin, quinone, additional chlorophylls, carotenoids and lipids. There is also a Cl(-1) ion associated with D1 and D2, which is required for oxygen evolution. The PSII complex binds additional chlorophylls, carotenoids and specific lipids. serves as cofactor. Phosphorylated in vitro.

It is found in the plastid. It localises to the chloroplast thylakoid membrane. The catalysed reaction is 2 a plastoquinone + 4 hnu + 2 H2O = 2 a plastoquinol + O2. Functionally, photosystem II (PSII) is a light-driven water:plastoquinone oxidoreductase that uses light energy to abstract electrons from H(2)O, generating O(2) and a proton gradient subsequently used for ATP formation. It consists of a core antenna complex that captures photons, and an electron transfer chain that converts photonic excitation into a charge separation. The D1/D2 (PsbA/PsbD) reaction center heterodimer binds P680, the primary electron donor of PSII as well as several subsequent electron acceptors. D2 is needed for assembly of a stable PSII complex. This is Photosystem II D2 protein from Chlamydomonas reinhardtii (Chlamydomonas smithii).